A 163-amino-acid polypeptide reads, in one-letter code: Lipoprotein signal peptidase (163 aa).

A run of 3 helical transmembrane segments spans residues 11-31 (ILIAVFVVIFDQVTKYIIATT), 63-83 (KMTFFFIITIIILIALVYFFI), and 88-108 (YNLFMQVAISLLFAGALGNFI). Residues D118 and D136 contribute to the active site. The helical transmembrane segment at 131-151 (IFNIADSSLTIGVILIIIALL) threads the bilayer.

The protein belongs to the peptidase A8 family.

It localises to the cell membrane. It carries out the reaction Release of signal peptides from bacterial membrane prolipoproteins. Hydrolyzes -Xaa-Yaa-Zaa-|-(S,diacylglyceryl)Cys-, in which Xaa is hydrophobic (preferably Leu), and Yaa (Ala or Ser) and Zaa (Gly or Ala) have small, neutral side chains.. The protein operates within protein modification; lipoprotein biosynthesis (signal peptide cleavage). Functionally, this protein specifically catalyzes the removal of signal peptides from prolipoproteins. This Staphylococcus aureus (strain MRSA252) protein is Lipoprotein signal peptidase.